The primary structure comprises 333 residues: Phosphate acyltransferase (333 aa).

It belongs to the PlsX family. In terms of assembly, homodimer. Probably interacts with PlsY.

It localises to the cytoplasm. The catalysed reaction is a fatty acyl-[ACP] + phosphate = an acyl phosphate + holo-[ACP]. It participates in lipid metabolism; phospholipid metabolism. In terms of biological role, catalyzes the reversible formation of acyl-phosphate (acyl-PO(4)) from acyl-[acyl-carrier-protein] (acyl-ACP). This enzyme utilizes acyl-ACP as fatty acyl donor, but not acyl-CoA. This chain is Phosphate acyltransferase, found in Clostridium botulinum (strain Alaska E43 / Type E3).